The primary structure comprises 382 residues: Galactokinase (382 aa).

34-37 (EHTD) is a binding site for substrate. Residue 124-130 (GAGLSSS) coordinates ATP. 2 residues coordinate Mg(2+): serine 130 and glutamate 162. The Proton acceptor role is filled by aspartate 174. Tyrosine 223 contributes to the substrate binding site.

This sequence belongs to the GHMP kinase family. GalK subfamily.

Its subcellular location is the cytoplasm. The catalysed reaction is alpha-D-galactose + ATP = alpha-D-galactose 1-phosphate + ADP + H(+). Its pathway is carbohydrate metabolism; galactose metabolism. In terms of biological role, catalyzes the transfer of the gamma-phosphate of ATP to D-galactose to form alpha-D-galactose-1-phosphate (Gal-1-P). The chain is Galactokinase from Salmonella typhi.